The chain runs to 405 residues: L-carnitine CoA-transferase (405 aa).

Lysine 97 and arginine 104 together coordinate CoA. The active-site Nucleophile is aspartate 169.

The protein belongs to the CoA-transferase III family. CaiB subfamily. As to quaternary structure, homodimer.

Its subcellular location is the cytoplasm. It carries out the reaction crotonobetainyl-CoA + (R)-carnitine = crotonobetaine + (R)-carnitinyl-CoA. It catalyses the reaction 4-(trimethylamino)butanoyl-CoA + (R)-carnitine = (R)-carnitinyl-CoA + 4-(trimethylamino)butanoate. The protein operates within amine and polyamine metabolism; carnitine metabolism. Functionally, catalyzes the reversible transfer of the CoA moiety from gamma-butyrobetainyl-CoA to L-carnitine to generate L-carnitinyl-CoA and gamma-butyrobetaine. Is also able to catalyze the reversible transfer of the CoA moiety from gamma-butyrobetainyl-CoA or L-carnitinyl-CoA to crotonobetaine to generate crotonobetainyl-CoA. The chain is L-carnitine CoA-transferase from Escherichia fergusonii (strain ATCC 35469 / DSM 13698 / CCUG 18766 / IAM 14443 / JCM 21226 / LMG 7866 / NBRC 102419 / NCTC 12128 / CDC 0568-73).